Reading from the N-terminus, the 295-residue chain is Bifunctional protein FolD (295 aa).

NADP(+) is bound by residues 167-169 (GRS), Ser-192, and Ile-233.

It belongs to the tetrahydrofolate dehydrogenase/cyclohydrolase family. In terms of assembly, homodimer.

It carries out the reaction (6R)-5,10-methylene-5,6,7,8-tetrahydrofolate + NADP(+) = (6R)-5,10-methenyltetrahydrofolate + NADPH. The enzyme catalyses (6R)-5,10-methenyltetrahydrofolate + H2O = (6R)-10-formyltetrahydrofolate + H(+). Its pathway is one-carbon metabolism; tetrahydrofolate interconversion. In terms of biological role, catalyzes the oxidation of 5,10-methylenetetrahydrofolate to 5,10-methenyltetrahydrofolate and then the hydrolysis of 5,10-methenyltetrahydrofolate to 10-formyltetrahydrofolate. The polypeptide is Bifunctional protein FolD (Paramagnetospirillum magneticum (strain ATCC 700264 / AMB-1) (Magnetospirillum magneticum)).